A 445-amino-acid polypeptide reads, in one-letter code: N-succinylarginine dihydrolase (445 aa).

Substrate contacts are provided by residues alanine 19 to serine 28, asparagine 110, and histidine 137 to arginine 138. Glutamate 174 is an active-site residue. Arginine 214 serves as a coordination point for substrate. The active site involves histidine 250. 2 residues coordinate substrate: aspartate 252 and asparagine 363. Residue cysteine 369 is the Nucleophile of the active site.

This sequence belongs to the succinylarginine dihydrolase family. As to quaternary structure, homodimer.

The enzyme catalyses N(2)-succinyl-L-arginine + 2 H2O + 2 H(+) = N(2)-succinyl-L-ornithine + 2 NH4(+) + CO2. Its pathway is amino-acid degradation; L-arginine degradation via AST pathway; L-glutamate and succinate from L-arginine: step 2/5. Catalyzes the hydrolysis of N(2)-succinylarginine into N(2)-succinylornithine, ammonia and CO(2). This is N-succinylarginine dihydrolase from Shewanella loihica (strain ATCC BAA-1088 / PV-4).